The primary structure comprises 354 residues: Sulfate permease CysP (354 aa).

The next 8 helical transmembrane spans lie at 3 to 23, 40 to 60, 77 to 97, 125 to 145, 164 to 184, 197 to 217, 293 to 313, and 320 to 340; these read LAAI…GAAA, ALIL…GEVV, IVCI…LLGI, LIIV…TYFV, ILGI…GMNN, VLDV…GALL, VWIV…SLFL, and IFIM…TKAI.

The protein belongs to the inorganic phosphate transporter (PiT) (TC 2.A.20) family.

Its subcellular location is the cell membrane. Involved in the import of sulfate. In Bacillus subtilis (strain 168), this protein is Sulfate permease CysP (cysP).